Here is a 376-residue protein sequence, read N- to C-terminus: Chaperone protein DnaJ (376 aa).

One can recognise a J domain in the interval 5 to 70 (DYYEILGVSK…QKRAAYDQYG (66 aa)). The CR-type zinc-finger motif lies at 131–209 (GVTKEIRIPT…CHGHGRVERS (79 aa)). Zn(2+) is bound by residues cysteine 144, cysteine 147, cysteine 161, cysteine 164, cysteine 183, cysteine 186, cysteine 197, and cysteine 200. 4 CXXCXGXG motif repeats span residues 144–151 (CDVCHGSG), 161–168 (CPTCHGSG), 183–190 (CPHCQGRG), and 197–204 (CNKCHGHG).

It belongs to the DnaJ family. As to quaternary structure, homodimer. Zn(2+) is required as a cofactor.

Its subcellular location is the cytoplasm. Its function is as follows. Participates actively in the response to hyperosmotic and heat shock by preventing the aggregation of stress-denatured proteins and by disaggregating proteins, also in an autonomous, DnaK-independent fashion. Unfolded proteins bind initially to DnaJ; upon interaction with the DnaJ-bound protein, DnaK hydrolyzes its bound ATP, resulting in the formation of a stable complex. GrpE releases ADP from DnaK; ATP binding to DnaK triggers the release of the substrate protein, thus completing the reaction cycle. Several rounds of ATP-dependent interactions between DnaJ, DnaK and GrpE are required for fully efficient folding. Also involved, together with DnaK and GrpE, in the DNA replication of plasmids through activation of initiation proteins. In Escherichia fergusonii (strain ATCC 35469 / DSM 13698 / CCUG 18766 / IAM 14443 / JCM 21226 / LMG 7866 / NBRC 102419 / NCTC 12128 / CDC 0568-73), this protein is Chaperone protein DnaJ.